A 495-amino-acid chain; its full sequence is Glutamyl-tRNA(Gln) amidotransferase subunit A (495 aa).

Catalysis depends on charge relay system residues Lys-78 and Ser-158. Ser-182 functions as the Acyl-ester intermediate in the catalytic mechanism.

Belongs to the amidase family. GatA subfamily. As to quaternary structure, heterotrimer of A, B and C subunits.

It catalyses the reaction L-glutamyl-tRNA(Gln) + L-glutamine + ATP + H2O = L-glutaminyl-tRNA(Gln) + L-glutamate + ADP + phosphate + H(+). Allows the formation of correctly charged Gln-tRNA(Gln) through the transamidation of misacylated Glu-tRNA(Gln) in organisms which lack glutaminyl-tRNA synthetase. The reaction takes place in the presence of glutamine and ATP through an activated gamma-phospho-Glu-tRNA(Gln). The sequence is that of Glutamyl-tRNA(Gln) amidotransferase subunit A from Dinoroseobacter shibae (strain DSM 16493 / NCIMB 14021 / DFL 12).